A 299-amino-acid polypeptide reads, in one-letter code: MAEFPASLLILNGKSTDNLPLREAIMLLREEGMTIHVRVTWEKGDAARYVEEARKLGVATVIAGGGDGTINEVSTALIQCEGDDIPALGILPLGTANDFATSVGIPEALDKALKLAIAGNAIAIDMAQVNKQTCFINMATGGFGTRITTETPEKLKAALGGVSYIIHGLMRMDTLQPDRCEIRGENFHWQGDALVIGIGNGRQAGGGQQLCPNALINDGLLQLRIFTGDEIIPTLVSTLKSDEDNPNIIEGASSWFDIQAPHEITFNLDGEPLSGQNFHIEILPAALRCRLPPDCPLLR.

The DAGKc domain maps to 2–133; it reads AEFPASLLIL…IDMAQVNKQT (132 aa). ATP is bound by residues Thr40, 66 to 72, and Thr95; that span reads GDGTINE. 3 residues coordinate Mg(2+): Leu215, Asp218, and Leu220. Residue Glu271 is the Proton acceptor of the active site.

The protein belongs to the diacylglycerol/lipid kinase family. YegS lipid kinase subfamily. The cofactor is Mg(2+). Requires Ca(2+) as cofactor.

Its subcellular location is the cytoplasm. In terms of biological role, probably phosphorylates lipids; the in vivo substrate is unknown. The chain is Probable lipid kinase YegS from Escherichia coli O45:K1 (strain S88 / ExPEC).